The primary structure comprises 299 residues: Bifunctional protein FolD (299 aa).

NADP(+) is bound by residues 168–170 (GRS), Ser-193, and Ile-234.

It belongs to the tetrahydrofolate dehydrogenase/cyclohydrolase family. As to quaternary structure, homodimer.

It carries out the reaction (6R)-5,10-methylene-5,6,7,8-tetrahydrofolate + NADP(+) = (6R)-5,10-methenyltetrahydrofolate + NADPH. It catalyses the reaction (6R)-5,10-methenyltetrahydrofolate + H2O = (6R)-10-formyltetrahydrofolate + H(+). It functions in the pathway one-carbon metabolism; tetrahydrofolate interconversion. In terms of biological role, catalyzes the oxidation of 5,10-methylenetetrahydrofolate to 5,10-methenyltetrahydrofolate and then the hydrolysis of 5,10-methenyltetrahydrofolate to 10-formyltetrahydrofolate. This is Bifunctional protein FolD from Bartonella tribocorum (strain CIP 105476 / IBS 506).